Reading from the N-terminus, the 65-residue chain is SPbeta prophage-derived uncharacterized protein YopU (65 aa).

In Bacillus subtilis (strain 168), this protein is SPbeta prophage-derived uncharacterized protein YopU (yopU).